The sequence spans 845 residues: MSDEQDKPTLSRKPLGLKRTVEAGQVQQQFSHGRRNTVVVEVKRRRVLGRPGEAAPTPEVEEAKAAPAPAPAPAAPRPAAPKPAAVDSLMTRQERQAQLLREAEEARMAALEENRRREEAERARAAEEERARAEKREEQAATKAPEPAPTPAASAPDATAADAPPAAEGPVETAARPATASAAPAPRRFTPVEALKRPEPKRPEPKASRGGENRRQSGKLTVTRALNEDEGARARSLAALKRAREKEKRSHMTSSGPREKQVREVVVPDTITVQELANRMAEKGADLVKALFKMGMPVTVNQTIDQDTAELLVTEFGHEIKRVSEADIDIRHDEDVDDAAQLKPRAPVVTIMGHVDHGKTSLLDALRGANVQAGEAGGITQHIGAYQVKAKDGSVITFLDTPGHEAFTEMRQRGANVTDIVILVVAADDGLKPQSIEAINHAKAAGVPIIVAINKVDKEGANPQRVRERLLEHELVVEEMGGDVQNVEVSALKKTGLDKLLDAIALQAEIMELKANPDRAAEGTVIEAKLDKGRGPVATILVRRGTLKVGDIFVCGAESGRVRALVDDHGKQVKQATPSMPVEVLGLGGVPMAGDTLIVVENEARAREVAAYRQEQALKKRTAQAPVSLEGMFSALADKANVIEYPVVIKGDVQGSVEAIVNALNKLSTDEIRVRVLHAGAGAITESDVTLAASTRAPIIGFNVRPNAKAREIANREKVRFLYYDVIYHLTADVAKEMAGELGPERIENVVGRAEVKDVFPAGKRDKAAGLLVLEGSIRKGLHARLTRDDVIVSATTIASLRRFKDDVAEVRAGLECGVVLADTNDIKPGDHLEVFEVELRERTL.

A disordered region spans residues 1 to 260 (MSDEQDKPTL…HMTSSGPREK (260 aa)). Over residues 68–81 (APAPAPAAPRPAAP) the composition is skewed to pro residues. Positions 101-140 (REAEEARMAALEENRRREEAERARAAEEERARAEKREEQA) are enriched in basic and acidic residues. 2 stretches are compositionally biased toward low complexity: residues 141–166 (ATKA…APPA) and 173–191 (TAAR…RFTP). Positions 194–215 (ALKRPEPKRPEPKASRGGENRR) are enriched in basic and acidic residues. The tr-type G domain occupies 344 to 514 (PRAPVVTIMG…ALQAEIMELK (171 aa)). The segment at 353–360 (GHVDHGKT) is G1. 353 to 360 (GHVDHGKT) serves as a coordination point for GTP. A G2 region spans residues 378–382 (GITQH). The G3 stretch occupies residues 400–403 (DTPG). GTP contacts are provided by residues 400–404 (DTPGH) and 454–457 (NKVD). Residues 454–457 (NKVD) are G4. A G5 region spans residues 490–492 (SAL).

Belongs to the TRAFAC class translation factor GTPase superfamily. Classic translation factor GTPase family. IF-2 subfamily.

The protein localises to the cytoplasm. Functionally, one of the essential components for the initiation of protein synthesis. Protects formylmethionyl-tRNA from spontaneous hydrolysis and promotes its binding to the 30S ribosomal subunits. Also involved in the hydrolysis of GTP during the formation of the 70S ribosomal complex. This is Translation initiation factor IF-2 from Sphingopyxis alaskensis (strain DSM 13593 / LMG 18877 / RB2256) (Sphingomonas alaskensis).